The chain runs to 434 residues: Glutamate-1-semialdehyde 2,1-aminomutase 1 (434 aa).

N6-(pyridoxal phosphate)lysine is present on K268.

The protein belongs to the class-III pyridoxal-phosphate-dependent aminotransferase family. HemL subfamily. In terms of assembly, homodimer. The cofactor is pyridoxal 5'-phosphate.

It localises to the cytoplasm. It catalyses the reaction (S)-4-amino-5-oxopentanoate = 5-aminolevulinate. The protein operates within porphyrin-containing compound metabolism; protoporphyrin-IX biosynthesis; 5-aminolevulinate from L-glutamyl-tRNA(Glu): step 2/2. This Shouchella clausii (strain KSM-K16) (Alkalihalobacillus clausii) protein is Glutamate-1-semialdehyde 2,1-aminomutase 1.